Here is a 346-residue protein sequence, read N- to C-terminus: Zinc finger CCCH domain-containing protein 28 (346 aa).

The interval 1–99 (MASAETPNPD…SPRYPDGKRR (99 aa)) is disordered. Positions 17 to 41 (DAAAAADPAAAAPAAAATDPAAAGS) are enriched in low complexity. Positions 62–86 (RSSRSRSRSPRRGRSRSRSRSRSRG) are enriched in basic residues. 6 C3H1-type zinc fingers span residues 103 to 131 (DLNV…HPHP), 138 to 165 (DSKV…HPPP), 181 to 209 (KVKM…HHSP), 211 to 237 (EDCA…HVMA), 282 to 308 (NYGV…HPDL), and 314 to 340 (NTQV…HPPA).

This chain is Zinc finger CCCH domain-containing protein 28, found in Oryza sativa subsp. japonica (Rice).